The primary structure comprises 306 residues: Putative syntaxin-3 (306 aa).

Over 1-279 (MPRDRLKELQ…QKRARKMKVC (279 aa)) the chain is Cytoplasmic. Positions 40-180 (QDADFEMFLE…QLSDEEIENA (141 aa)) are required for the regulation of the defecation motor program. The 63-residue stretch at 204-266 (YDEVKSRADE…KQARGNVEEA (63 aa)) folds into the t-SNARE coiled-coil homology domain. A helical; Anchor for type IV membrane protein membrane pass occupies residues 280-300 (IIIGSIIAVLILILFIQSAVC). Over 301-306 (HFTPIC) the chain is Extracellular.

It belongs to the syntaxin family. Expressed in body wall, pharyngeal, vulval and enteric muscles and in some head neurons.

The protein localises to the cell membrane. Its function is as follows. Potentially involved in docking of synaptic vesicles at presynaptic active zones. Acts in the intestine to regulate anterior body muscle contractions (aBOC) and the expulsion steps during the defecation motor program (DMP). This is Putative syntaxin-3 from Caenorhabditis elegans.